The chain runs to 116 residues: Iron-sulfur cluster insertion protein ErpA (116 aa).

Iron-sulfur cluster contacts are provided by C44, C108, and C110.

This sequence belongs to the HesB/IscA family. Homodimer. The cofactor is iron-sulfur cluster.

In terms of biological role, required for insertion of 4Fe-4S clusters for at least IspG. This Shewanella amazonensis (strain ATCC BAA-1098 / SB2B) protein is Iron-sulfur cluster insertion protein ErpA.